The primary structure comprises 715 residues: Discoidin, CUB and LCCL domain-containing protein 1 (715 aa).

Residues 1-34 form the signal peptide; sequence MVPGARGGGALARAAGRGLLALLLAVSAPLRLQA. Over 35–459 the chain is Extracellular; it reads EELGDGCGHL…TSTGINITTV (425 aa). Disulfide bonds link C41/C68 and C94/C112. Positions 41–150 constitute a CUB domain; the sequence is CGHLVTYQDS…RGFLLTYASS (110 aa). A glycan (N-linked (GlcNAc...) asparagine) is linked at N64. N-linked (GlcNAc...) asparagine glycosylation occurs at N124. The LCCL domain occupies 152–248; that stretch reads HPDLITCLER…RDGSLSDKRF (97 aa). Disulfide bonds link C158-C174 and C178-C200. The region spanning 248–412 is the F5/8 type C domain; the sequence is FLFTSNGCSR…IALKVELIGC (165 aa). N277 carries an N-linked (GlcNAc...) asparagine glycan. The disordered stretch occupies residues 278-312; it reads ESGDQVHWSPGQARLQDQGPSWASGDSSNNHKPRE. Polar residues predominate over residues 295 to 307; sequence QGPSWASGDSSNN. 3 N-linked (GlcNAc...) asparagine glycosylation sites follow: N351, N418, and N455. Residues 460–480 traverse the membrane as a helical segment; sequence AIPLVLLVVLVFAGMGIFAAF. The Cytoplasmic segment spans residues 481–715; sequence RKKKKKGSPY…LNQTAMTALL (235 aa). S513 is subject to Phosphoserine. T614 is modified (phosphothreonine). The interval 619 to 702 is disordered; sequence SGYRVPGPQP…SDSYSAPRDC (84 aa).

The protein resides in the membrane. In Homo sapiens (Human), this protein is Discoidin, CUB and LCCL domain-containing protein 1 (DCBLD1).